A 223-amino-acid polypeptide reads, in one-letter code: Probable iron-sulfur cluster repair protein HI_1677 (223 aa).

Belongs to the RIC family.

It is found in the cytoplasm. Di-iron-containing protein involved in the repair of iron-sulfur clusters. This is Probable iron-sulfur cluster repair protein HI_1677 from Haemophilus influenzae (strain ATCC 51907 / DSM 11121 / KW20 / Rd).